The sequence spans 451 residues: Phosphoglucosamine mutase (451 aa).

S101 functions as the Phosphoserine intermediate in the catalytic mechanism. S101, D240, D242, and D244 together coordinate Mg(2+). A Phosphoserine modification is found at S101.

Belongs to the phosphohexose mutase family. It depends on Mg(2+) as a cofactor. Post-translationally, activated by phosphorylation.

It carries out the reaction alpha-D-glucosamine 1-phosphate = D-glucosamine 6-phosphate. In terms of biological role, catalyzes the conversion of glucosamine-6-phosphate to glucosamine-1-phosphate. This Streptococcus pyogenes serotype M2 (strain MGAS10270) protein is Phosphoglucosamine mutase.